Consider the following 136-residue polypeptide: Large ribosomal subunit protein uL16 (136 aa).

It belongs to the universal ribosomal protein uL16 family. In terms of assembly, part of the 50S ribosomal subunit.

In terms of biological role, binds 23S rRNA and is also seen to make contacts with the A and possibly P site tRNAs. In Histophilus somni (strain 129Pt) (Haemophilus somnus), this protein is Large ribosomal subunit protein uL16.